Consider the following 465-residue polypeptide: Cysteine--tRNA ligase (465 aa).

Cysteine 27 is a binding site for Zn(2+). The short motif at 29–39 (PTVYNYIHIGN) is the 'HIGH' region element. Zn(2+)-binding residues include cysteine 207, histidine 232, and glutamate 236. Residues 264-268 (KMSKS) carry the 'KMSKS' region motif. Lysine 267 contributes to the ATP binding site.

This sequence belongs to the class-I aminoacyl-tRNA synthetase family. Monomer. Zn(2+) serves as cofactor.

The protein resides in the cytoplasm. It catalyses the reaction tRNA(Cys) + L-cysteine + ATP = L-cysteinyl-tRNA(Cys) + AMP + diphosphate. This chain is Cysteine--tRNA ligase, found in Clostridioides difficile (strain 630) (Peptoclostridium difficile).